The chain runs to 248 residues: Triosephosphate isomerase (248 aa).

9–11 serves as a coordination point for substrate; it reads NWK. The Electrophile role is filled by His94. Glu166 (proton acceptor) is an active-site residue. Substrate is bound by residues Gly172, Ser212, and 233–234; that span reads GG.

The protein belongs to the triosephosphate isomerase family. Homodimer.

Its subcellular location is the cytoplasm. It carries out the reaction D-glyceraldehyde 3-phosphate = dihydroxyacetone phosphate. Its pathway is carbohydrate biosynthesis; gluconeogenesis. The protein operates within carbohydrate degradation; glycolysis; D-glyceraldehyde 3-phosphate from glycerone phosphate: step 1/1. Functionally, involved in the gluconeogenesis. Catalyzes stereospecifically the conversion of dihydroxyacetone phosphate (DHAP) to D-glyceraldehyde-3-phosphate (G3P). The sequence is that of Triosephosphate isomerase from Alkaliphilus metalliredigens (strain QYMF).